Here is a 319-residue protein sequence, read N- to C-terminus: HPr kinase/phosphorylase (319 aa).

Residues His-144 and Lys-165 contribute to the active site. An ATP-binding site is contributed by 159-166 (GKSGIGKS). Mg(2+) is bound at residue Ser-166. Catalysis depends on Asp-183, which acts as the Proton acceptor; for phosphorylation activity. Proton donor; for dephosphorylation activity. Residues 207-216 (MEIRGLGVIN) form an important for the catalytic mechanism of both phosphorylation and dephosphorylation region. Residue Glu-208 coordinates Mg(2+). Arg-249 is a catalytic residue. Residues 270-275 (PVRPGR) are important for the catalytic mechanism of dephosphorylation.

It belongs to the HPrK/P family. As to quaternary structure, homohexamer. Mg(2+) is required as a cofactor.

The enzyme catalyses [HPr protein]-L-serine + ATP = [HPr protein]-O-phospho-L-serine + ADP + H(+). It carries out the reaction [HPr protein]-O-phospho-L-serine + phosphate + H(+) = [HPr protein]-L-serine + diphosphate. Its function is as follows. Catalyzes the ATP- as well as the pyrophosphate-dependent phosphorylation of a specific serine residue in HPr, a phosphocarrier protein of the phosphoenolpyruvate-dependent sugar phosphotransferase system (PTS). HprK/P also catalyzes the pyrophosphate-producing, inorganic phosphate-dependent dephosphorylation (phosphorolysis) of seryl-phosphorylated HPr (P-Ser-HPr). The protein is HPr kinase/phosphorylase of Geobacter sulfurreducens (strain ATCC 51573 / DSM 12127 / PCA).